The following is a 235-amino-acid chain: Meiotically up-regulated gene 123 protein (235 aa).

Basic and acidic residues predominate over residues Met-1 to Tyr-14. Disordered regions lie at residues Met-1–Ser-34, Pro-58–Arg-83, and Ser-169–Asp-235. The segment covering Ser-15–Ser-34 has biased composition (polar residues). The segment covering Ser-61–Lys-77 has biased composition (low complexity). A compositionally biased stretch (polar residues) spans Glu-176–Arg-202. 3 positions are modified to phosphoserine: Ser-180, Ser-187, and Ser-189. Thr-191 is subject to Phosphothreonine.

It localises to the cytoplasm. Its subcellular location is the nucleus. In terms of biological role, involved in sporulation and has a role in meiosis. The protein is Meiotically up-regulated gene 123 protein (mug123) of Schizosaccharomyces pombe (strain 972 / ATCC 24843) (Fission yeast).